A 205-amino-acid polypeptide reads, in one-letter code: Holliday junction branch migration complex subunit RuvA (205 aa).

Residues 1 to 62 (MFEYVTGYVE…EDIMALYGFK (62 aa)) are domain I. The interval 63-141 (TREERLLFTK…DVVPDVFVDL (79 aa)) is domain II. Residues 142–152 (FSDEERFDEKK) form a flexible linker region. Residues 153–205 (GSSTELDEALEALRALGYAEREINRVLPELLKESLTTDQYIKKALSLLLNGKR) are domain III.

It belongs to the RuvA family. In terms of assembly, homotetramer. Forms an RuvA(8)-RuvB(12)-Holliday junction (HJ) complex. HJ DNA is sandwiched between 2 RuvA tetramers; dsDNA enters through RuvA and exits via RuvB. An RuvB hexamer assembles on each DNA strand where it exits the tetramer. Each RuvB hexamer is contacted by two RuvA subunits (via domain III) on 2 adjacent RuvB subunits; this complex drives branch migration. In the full resolvosome a probable DNA-RuvA(4)-RuvB(12)-RuvC(2) complex forms which resolves the HJ.

Its subcellular location is the cytoplasm. The RuvA-RuvB-RuvC complex processes Holliday junction (HJ) DNA during genetic recombination and DNA repair, while the RuvA-RuvB complex plays an important role in the rescue of blocked DNA replication forks via replication fork reversal (RFR). RuvA specifically binds to HJ cruciform DNA, conferring on it an open structure. The RuvB hexamer acts as an ATP-dependent pump, pulling dsDNA into and through the RuvAB complex. HJ branch migration allows RuvC to scan DNA until it finds its consensus sequence, where it cleaves and resolves the cruciform DNA. In Bacillus cytotoxicus (strain DSM 22905 / CIP 110041 / 391-98 / NVH 391-98), this protein is Holliday junction branch migration complex subunit RuvA.